Reading from the N-terminus, the 437-residue chain is MKEQKLTTENYKGTRDFYPEDMRLRNYLFSVMKDVVRSYGYEEYDGPMVESLDLYRAKTGEEIVGKQIYNFIDKGDREVAIRPEMTPTVARMVAKKLRELPRPIRWFSIPNLWRYEQPGHGRLREHWQLNVDMFGVTSSRAELEILSLACDILFAFGAPKNSFKVTISHRSLLDEFLLDGLKVSPNQAHEVSKILDKKNKITQDEYVALVTKTIPNDSSAVSKIDLFLNATVNSLNQIPGIKEETLAAIKGLFEDIKTIGLSDIIHFDPSVVRGFDYYTGFIFEIFDTSPQNKRSLYGGGRYDNLIGLFSNEELTGIGFGLGDVTLQNFLTAHNLLPNFASDTTVFIPLLDDSSFAENHNFAKELRKEKISAEVSLVSQKMGKQLSYAEKKGYRWILLRGEDEIKTNTVTLKDMASRNQFTFSFSEALQKIKEELSK.

This sequence belongs to the class-II aminoacyl-tRNA synthetase family. Homodimer.

Its subcellular location is the cytoplasm. It carries out the reaction tRNA(His) + L-histidine + ATP = L-histidyl-tRNA(His) + AMP + diphosphate + H(+). The chain is Histidine--tRNA ligase from Leptospira biflexa serovar Patoc (strain Patoc 1 / Ames).